The following is a 692-amino-acid chain: SH3 domain-containing protein 21 (692 aa).

Residues 1 to 60 are disordered; the sequence is MVQSELQLQPRAGGRAEAASWGDRGNDKGGFGNPDMPSVSPGPQRPPKLSSLAYDSPPDY. The region spanning 65–126 is the SH3 domain; the sequence is SHPEAYRVLF…PDNFVLPPPP (62 aa). Disordered stretches follow at residues 132-501, 536-605, and 672-692; these read PRKV…EVLP, PKGG…SQET, and VMQGTQKSQTPRIIHAQTQTY. Basic and acidic residues predominate over residues 177-186; that stretch reads PSRDSQKLTS. Residues 210–220 are compositionally biased toward polar residues; sequence TQTPQQRSVSS. Composition is skewed to basic and acidic residues over residues 378-396, 490-501, and 542-582; these read VSTRDDTQFHHFSSEEALQ, NEERLLRGEVLP, and SKEE…KEEV. Residues 628-678 adopt a coiled-coil conformation; it reads SLRGEVESLRRALELMGVQLERKLTDIWEELKSEKEQRQRLEVQVMQGTQK. A compositionally biased stretch (polar residues) spans 673-692; the sequence is MQGTQKSQTPRIIHAQTQTY.

This chain is SH3 domain-containing protein 21 (SH3D21), found in Macaca fascicularis (Crab-eating macaque).